A 269-amino-acid polypeptide reads, in one-letter code: NAD kinase (269 aa).

Residue Asp45 is the Proton acceptor of the active site. Residues 45 to 46, 121 to 122, Arg147, Asp149, 160 to 165, and Ala184 each bind NAD(+); these read DG, NE, and TAYNRS.

It belongs to the NAD kinase family. A divalent metal cation serves as cofactor.

It is found in the cytoplasm. It carries out the reaction NAD(+) + ATP = ADP + NADP(+) + H(+). Functionally, involved in the regulation of the intracellular balance of NAD and NADP, and is a key enzyme in the biosynthesis of NADP. Catalyzes specifically the phosphorylation on 2'-hydroxyl of the adenosine moiety of NAD to yield NADP. The protein is NAD kinase of Pediococcus pentosaceus (strain ATCC 25745 / CCUG 21536 / LMG 10740 / 183-1w).